Here is a 269-residue protein sequence, read N- to C-terminus: Trans-aconitate 2-methyltransferase (269 aa).

It belongs to the methyltransferase superfamily. Tam family.

Its subcellular location is the cytoplasm. It carries out the reaction trans-aconitate + S-adenosyl-L-methionine = (E)-3-(methoxycarbonyl)pent-2-enedioate + S-adenosyl-L-homocysteine. Catalyzes the S-adenosylmethionine monomethyl esterification of trans-aconitate. This chain is Trans-aconitate 2-methyltransferase, found in Streptomyces avermitilis (strain ATCC 31267 / DSM 46492 / JCM 5070 / NBRC 14893 / NCIMB 12804 / NRRL 8165 / MA-4680).